The primary structure comprises 299 residues: Coenzyme PQQ synthesis protein B (299 aa).

It belongs to the PqqB family.

The protein operates within cofactor biosynthesis; pyrroloquinoline quinone biosynthesis. Functionally, may be involved in the transport of PQQ or its precursor to the periplasm. The protein is Coenzyme PQQ synthesis protein B of Methylobacterium sp. (strain 4-46).